Here is a 589-residue protein sequence, read N- to C-terminus: MEEGRLHRVMLSCGYSFTYARNLPEKAILYSQNCQQGYYTKEYTTVAGDVKIALIIRADPFIELPIAYILELPEQFKDRLMPHISLEGFLCYVEQMEADWDSNNLEDTYREVDAQIQRTLVNSVSAAMEGSNDKKELEGEFTAYWRPSESLFVLSNANRSTRLKTFISQSVRPNGSSQVEYITVEESSPENSGKVISAWLKLRYLPKNSLKEYHISTHYISVNPSRVAGMKWPPASFRDLLSWLGKADHNAKNKVVEYIKKEGKKRYVFLFDVLKQDTFGIYVEFDLKSIDLKRYKHSAKNSTAKLSTVLGGKSVCSMYQRLGVVRADIETLLSRNTRREGSAKLSEKRIALVGCGTIGGYLAELLLRNGAGCGKGHLHLYDDDLYKPSNFGRHTLSAHDFGRYKSLSLARKLKDSVHLPTQIIGFEKQFSIRADLMQKYDIIIDATGRPPVSKRMASIVRTIALEKRPKIIHAFNDGNGRASKVFIDDGRSCYGCMVSNPEKYRNGIDSRFCHIDISREKNKNCGSTYTPYDAAVSNITASLTQMAVLSTLDPELKWTYSEHMLEGGRSLKSQFLPRQPNCPICNEYE.

Residue Cys13 forms a Glycyl cysteine dithioester (Cys-Gly) (interchain with G-Cter in DncV) linkage. A Glycyl lysine isopeptide (Lys-Gly) (interchain with G-Cter in DncV) cross-link involves residue Lys77. Cys91 acts as the For E2-like domain in catalysis. Residues Lys305, Lys387, and Lys484 each participate in a glycyl lysine isopeptide (Lys-Gly) (interchain with G-Cter in DncV) cross-link. A Glycyl cysteine dithioester (Cys-Gly) (interchain with G-Cter in DncV) cross-link involves residue Cys493. Catalysis depends on for E1-like domain residues Cys493, Cys496, and Cys513. Cys513 participates in a covalent cross-link: Glycyl cysteine dithioester (Cys-Gly) (interchain with G-Cter in DncV). Lys523 is covalently cross-linked (Glycyl lysine isopeptide (Lys-Gly) (interchain with G-Cter in DncV)).

It in the C-terminal section; belongs to the HesA/MoeB/ThiF family. In terms of assembly, a Cap2 dimer is bound on either side by a DncV monomer. Post-translationally, conjugated to DncV via 5 different Lys residues and 3 Cys residues.

In terms of biological role, CD-NTase priming component of a CBASS antiviral system. CBASS (cyclic oligonucleotide-based antiphage signaling system) provides immunity against bacteriophages. The CD-NTase protein (DncV) synthesizes cyclic nucleotides in response to infection; these serve as specific second messenger signals. The signals activate a diverse range of effectors, leading to bacterial cell death and thus abortive phage infection. A type II-A(GA) CBASS system. Functionally, conjugates DncV to itself in vitro and to other cellular proteins in vivo; conjugation requires ATP. This primes DncV, upon phage infection CdnA activates and makes cyclic nucleotides. Its function is as follows. Protects E.coli against phage infection. When capV and dncV are introduced in E.coli MG1655 there is 1000-fold protection against phage P1; protection against other phage (T2, T4, T5, T6 and lambda-vir) requires the 2 subsequent genes. In another paper the capV-dncV-cap2-cap3 operon gives 10(4)-10(5)-fold protection against phages lambda, T2, T4 and T6, about 1000-fold protection against P1 and 10-fold protection against T5. The protein is ATP-dependent ubiquitin transferase-like protein Cap2 of Escherichia coli (strain TW11681).